Consider the following 355-residue polypeptide: Phosphoserine aminotransferase (355 aa).

R41 is an L-glutamate binding site. Pyridoxal 5'-phosphate-binding positions include 75 to 76 (AS), W99, T147, D166, and Q189. K190 carries the post-translational modification N6-(pyridoxal phosphate)lysine. Pyridoxal 5'-phosphate is bound at residue 231–232 (NT).

The protein belongs to the class-V pyridoxal-phosphate-dependent aminotransferase family. SerC subfamily. In terms of assembly, homodimer. Pyridoxal 5'-phosphate serves as cofactor.

It is found in the cytoplasm. The enzyme catalyses O-phospho-L-serine + 2-oxoglutarate = 3-phosphooxypyruvate + L-glutamate. It carries out the reaction 4-(phosphooxy)-L-threonine + 2-oxoglutarate = (R)-3-hydroxy-2-oxo-4-phosphooxybutanoate + L-glutamate. The protein operates within amino-acid biosynthesis; L-serine biosynthesis; L-serine from 3-phospho-D-glycerate: step 2/3. It functions in the pathway cofactor biosynthesis; pyridoxine 5'-phosphate biosynthesis; pyridoxine 5'-phosphate from D-erythrose 4-phosphate: step 3/5. Catalyzes the reversible conversion of 3-phosphohydroxypyruvate to phosphoserine and of 3-hydroxy-2-oxo-4-phosphonooxybutanoate to phosphohydroxythreonine. The protein is Phosphoserine aminotransferase of Bacteroides thetaiotaomicron (strain ATCC 29148 / DSM 2079 / JCM 5827 / CCUG 10774 / NCTC 10582 / VPI-5482 / E50).